Consider the following 442-residue polypeptide: Trigger factor (442 aa).

The PPIase FKBP-type domain occupies 162 to 247 (GDTVTIDYKG…IHEVKSKQLP (86 aa)).

This sequence belongs to the FKBP-type PPIase family. Tig subfamily.

The protein localises to the cytoplasm. The enzyme catalyses [protein]-peptidylproline (omega=180) = [protein]-peptidylproline (omega=0). Its function is as follows. Involved in protein export. Acts as a chaperone by maintaining the newly synthesized protein in an open conformation. Functions as a peptidyl-prolyl cis-trans isomerase. This chain is Trigger factor, found in Lactobacillus acidophilus (strain ATCC 700396 / NCK56 / N2 / NCFM).